The chain runs to 158 residues: Small ribosomal subunit protein uS9 (158 aa).

This sequence belongs to the universal ribosomal protein uS9 family.

The polypeptide is Small ribosomal subunit protein uS9 (Brucella melitensis biotype 1 (strain ATCC 23456 / CCUG 17765 / NCTC 10094 / 16M)).